Reading from the N-terminus, the 246-residue chain is E3 ubiquitin-protein ligase MARCHF2 (246 aa).

The segment at 56-116 (DTPSDGPFCR…ELCHTEFAVE (61 aa)) adopts an RING-CH-type zinc-finger fold. Residues 56–116 (DTPSDGPFCR…ELCHTEFAVE (61 aa)) are required for inhibition of HIV-1 virus production and VSV G protein expression. Zn(2+)-binding residues include Cys64, Cys67, Cys80, Cys82, His90, Cys93, Cys106, and Cys109. Positions 121-246 (PLTEWLKDPG…LKKVAEETPV (126 aa)) are required for interaction with IKBKG. Transmembrane regions (helical) follow at residues 138 to 158 (LCCD…SGWL) and 175 to 195 (AVGL…WTLV).

Interacts with STX6; the interaction promotes MARCHF2-mediated ubiquitination and degradation of CFTR. Interacts with MARCHF3. Interacts with GOPC/CAL; the interaction leads to CFTR ubiquitination and degradation. Interacts with CFTR; the interaction leads to CFTR ubiqtuitination and degradation. Interacts (via PDZ domain) with DLG1 (via PDZ domains); the interaction leads to DLG1 ubiqtuitination and degradation. Interacts with ERGIC3. Interacts with ADRB2. Interacts with IKBKG/NEMO; during the late stages of macrophage viral and bacterial infection; the interaction leads to ubiquitination and degradation of IKBKG/NEMO. As to expression, broadly expressed.

The protein localises to the endoplasmic reticulum membrane. The protein resides in the lysosome membrane. It localises to the endosome membrane. It is found in the golgi apparatus membrane. Its subcellular location is the cytoplasm. The protein localises to the cell membrane. The catalysed reaction is S-ubiquitinyl-[E2 ubiquitin-conjugating enzyme]-L-cysteine + [acceptor protein]-L-lysine = [E2 ubiquitin-conjugating enzyme]-L-cysteine + N(6)-ubiquitinyl-[acceptor protein]-L-lysine.. Its pathway is protein modification; protein ubiquitination. In terms of biological role, E3 ubiquitin-protein ligase that may mediate ubiquitination of TFRC and CD86, and promote their subsequent endocytosis and sorting to lysosomes via multivesicular bodies. E3 ubiquitin ligases accept ubiquitin from an E2 ubiquitin-conjugating enzyme in the form of a thioester and then directly transfer the ubiquitin to targeted substrates. Together with GOPC/CAL mediates the ubiquitination and lysosomal degradation of CFTR. Ubiquitinates and therefore mediates the degradation of DLG1. Regulates the intracellular trafficking and secretion of alpha1-antitrypsin/SERPINA1 and HP/haptoglobin via ubiquitination and degradation of the cargo receptor ERGIC3. Negatively regulates the antiviral and antibacterial immune response by repression of the NF-kB and type 1 IFN signaling pathways, via MARCHF2-mediated K48-linked polyubiquitination of IKBKG/NEMO, resulting in its proteasomal degradation. May be involved in endosomal trafficking through interaction with STX6. Its function is as follows. (Microbial infection) Positively regulates the degradation of Vesicular stomatitis virus (VSV) G protein via the lysosomal degradation pathway. Represses HIV-1 viral production and may inhibit the translocation of HIV-1 env to the cell surface, resulting in decreased viral cell-cell transmission. The polypeptide is E3 ubiquitin-protein ligase MARCHF2 (Homo sapiens (Human)).